A 246-amino-acid chain; its full sequence is Pyridoxine 5'-phosphate synthase (246 aa).

Position 12 (asparagine 12) interacts with 3-amino-2-oxopropyl phosphate. 14 to 15 (DH) is a 1-deoxy-D-xylulose 5-phosphate binding site. 3-amino-2-oxopropyl phosphate is bound at residue arginine 23. The Proton acceptor role is filled by histidine 48. 2 residues coordinate 1-deoxy-D-xylulose 5-phosphate: arginine 50 and histidine 55. Glutamate 75 acts as the Proton acceptor in catalysis. Position 105 (threonine 105) interacts with 1-deoxy-D-xylulose 5-phosphate. The active-site Proton donor is histidine 196. 3-amino-2-oxopropyl phosphate contacts are provided by residues glycine 197 and 218–219 (GH).

This sequence belongs to the PNP synthase family. Homooctamer; tetramer of dimers.

Its subcellular location is the cytoplasm. It carries out the reaction 3-amino-2-oxopropyl phosphate + 1-deoxy-D-xylulose 5-phosphate = pyridoxine 5'-phosphate + phosphate + 2 H2O + H(+). The protein operates within cofactor biosynthesis; pyridoxine 5'-phosphate biosynthesis; pyridoxine 5'-phosphate from D-erythrose 4-phosphate: step 5/5. Catalyzes the complicated ring closure reaction between the two acyclic compounds 1-deoxy-D-xylulose-5-phosphate (DXP) and 3-amino-2-oxopropyl phosphate (1-amino-acetone-3-phosphate or AAP) to form pyridoxine 5'-phosphate (PNP) and inorganic phosphate. This is Pyridoxine 5'-phosphate synthase from Pseudomonas putida (strain W619).